The primary structure comprises 142 residues: MKFLTVAIVLAAAASAAPTKEVLPYPPVVAPPPYGGIAPDHNPPFGGGIPPINSGGLPPTNGAYPGGNNRHLCPSGLLYTNPQCCSAGVLGVADLDCKTPSSVPMNGADFERICAADGSKAQCCSVPVAGLALLCQDAIGTN.

The N-terminal stretch at 1–16 (MKFLTVAIVLAAAASA) is a signal peptide. 4 disulfide bridges follow: cysteine 73–cysteine 123, cysteine 84–cysteine 114, cysteine 85–cysteine 97, and cysteine 124–cysteine 135.

It belongs to the cerato-ulmin hydrophobin family. Homodimer. Homodimers further self-assemble to form highly ordered films at water-air interfaces through intermolecular interactions.

The protein localises to the secreted. Its subcellular location is the cell wall. Aerial growth, conidiation, and dispersal of filamentous fungi in the environment rely upon a capability of their secreting small amphipathic proteins called hydrophobins (HPBs) with low sequence identity. Class I can self-assemble into an outermost layer of rodlet bundles on aerial cell surfaces, conferring cellular hydrophobicity that supports fungal growth, development and dispersal; whereas Class II form highly ordered films at water-air interfaces through intermolecular interactions but contribute nothing to the rodlet structure. The sequence is that of Class II hydrophobin 7 from Trichoderma asperellum (strain ATCC 204424 / CBS 433.97 / NBRC 101777).